Consider the following 609-residue polypeptide: Glutamine--fructose-6-phosphate aminotransferase [isomerizing] (609 aa).

Cysteine 2 (nucleophile; for GATase activity) is an active-site residue. The Glutamine amidotransferase type-2 domain maps to 2 to 219 (CGIVGYIGGR…DGECARLTRD (218 aa)). SIS domains lie at 285–424 (SSDL…LRGT) and 458–599 (LARE…VDQP). Lysine 604 serves as the catalytic For Fru-6P isomerization activity.

In terms of assembly, homodimer.

Its subcellular location is the cytoplasm. The enzyme catalyses D-fructose 6-phosphate + L-glutamine = D-glucosamine 6-phosphate + L-glutamate. Functionally, catalyzes the first step in hexosamine metabolism, converting fructose-6P into glucosamine-6P using glutamine as a nitrogen source. The protein is Glutamine--fructose-6-phosphate aminotransferase [isomerizing] of Gloeobacter violaceus (strain ATCC 29082 / PCC 7421).